The following is a 240-amino-acid chain: Lipoprotein-releasing system ATP-binding protein LolD (240 aa).

Residues 15–240 (IRAESLGKTY…GLRELTSAEV (226 aa)) enclose the ABC transporter domain. Position 51–58 (51–58 (GASGAGKS)) interacts with ATP.

Belongs to the ABC transporter superfamily. Lipoprotein translocase (TC 3.A.1.125) family. As to quaternary structure, the complex is composed of two ATP-binding proteins (LolD) and two transmembrane proteins (LolC and LolE).

Its subcellular location is the cell inner membrane. In terms of biological role, part of the ABC transporter complex LolCDE involved in the translocation of mature outer membrane-directed lipoproteins, from the inner membrane to the periplasmic chaperone, LolA. Responsible for the formation of the LolA-lipoprotein complex in an ATP-dependent manner. The polypeptide is Lipoprotein-releasing system ATP-binding protein LolD (Xylella fastidiosa (strain Temecula1 / ATCC 700964)).